Consider the following 78-residue polypeptide: uncharacterized protein (78 aa).

Positions 51–78 are disordered; sequence GGKWDGGGSGGKWNGGGGSGGGSWKKWN.

This is an uncharacterized protein from Dictyostelium discoideum (Social amoeba).